Reading from the N-terminus, the 399-residue chain is Probable sugar efflux transporter (399 aa).

12 helical membrane-spanning segments follow: residues 15–35 (VVTLAIAAFIFNTTEFAPVGL), 50–70 (VGMMLTIYAWVVALMSLPFML), 81–101 (LIGLFILFIASHVLSFFAWNF), 103–123 (VLVISRIGIAFAHAVFWSITS), 136–156 (AQALSLIATGTALAMVFGIPI), 168–188 (MTFLAIGLGALATLACLVKLL), 209–229 (PALVSVYILTVVVVTAHYTAY), 246–266 (FATVLLLILGGAGIIGSILFG), 273–293 (ASGLISLAIALLLACLLLLLP), 301–321 (LMLLSIFWGVAIMIIGLGMQV), 333–353 (VAMSLFSGIFNIGIGAGALVG), and 364–384 (SVGYVGAIPALVALVWSLMIF).

The protein belongs to the major facilitator superfamily. SotB (TC 2.A.1.2) family.

The protein localises to the cell inner membrane. Involved in the efflux of sugars. The physiological role may be the reduction of the intracellular concentration of toxic sugars or sugar metabolites. This chain is Probable sugar efflux transporter, found in Klebsiella pneumoniae subsp. pneumoniae (strain ATCC 700721 / MGH 78578).